The primary structure comprises 380 residues: Glutamate 5-kinase (380 aa).

Lysine 15 lines the ATP pocket. Substrate-binding residues include serine 59, aspartate 146, and asparagine 158. 178-179 (TD) contributes to the ATP binding site. The region spanning 285 to 363 (RGSVTVDAGA…AEFERLLGYA (79 aa)) is the PUA domain.

Belongs to the glutamate 5-kinase family.

It localises to the cytoplasm. It carries out the reaction L-glutamate + ATP = L-glutamyl 5-phosphate + ADP. Its pathway is amino-acid biosynthesis; L-proline biosynthesis; L-glutamate 5-semialdehyde from L-glutamate: step 1/2. Functionally, catalyzes the transfer of a phosphate group to glutamate to form L-glutamate 5-phosphate. This is Glutamate 5-kinase from Acidovorax ebreus (strain TPSY) (Diaphorobacter sp. (strain TPSY)).